Reading from the N-terminus, the 350-residue chain is Small ribosomal subunit biogenesis GTPase RsgA (350 aa).

Polar residues predominate over residues 1–17 (MSKNKLSKGQQRRVNAN). Positions 1 to 33 (MSKNKLSKGQQRRVNANHQRRLKTSKEKPDYDD) are disordered. The region spanning 104–273 (TSVLTRPDFY…VIDSPGVREF (170 aa)) is the CP-type G domain. GTP is bound by residues 160-163 (NKID) and 214-222 (GQSGVGKSS). Cysteine 297, cysteine 302, histidine 304, and cysteine 310 together coordinate Zn(2+).

It belongs to the TRAFAC class YlqF/YawG GTPase family. RsgA subfamily. Monomer. Associates with 30S ribosomal subunit, binds 16S rRNA. Requires Zn(2+) as cofactor.

The protein resides in the cytoplasm. In terms of biological role, one of several proteins that assist in the late maturation steps of the functional core of the 30S ribosomal subunit. Helps release RbfA from mature subunits. May play a role in the assembly of ribosomal proteins into the subunit. Circularly permuted GTPase that catalyzes slow GTP hydrolysis, GTPase activity is stimulated by the 30S ribosomal subunit. The sequence is that of Small ribosomal subunit biogenesis GTPase RsgA from Escherichia coli O6:H1 (strain CFT073 / ATCC 700928 / UPEC).